The sequence spans 84 residues: MEKLTILLLVAAVLMSTHAMFQGGGEKSRKAINFSETRKLARNKQKRCDGWSTYCHDDSECCSETCANSYCTLIKGVRTTSHPI.

A signal peptide spans 1 to 19 (MEKLTILLLVAAVLMSTHA). A propeptide spanning residues 20–47 (MFQGGGEKSRKAINFSETRKLARNKQKR) is cleaved from the precursor. 3 disulfides stabilise this stretch: C48–C62, C55–C66, and C61–C71. W51 carries the 6'-bromotryptophan; in Am6.1b modification. 2 positions are modified to 4-carboxyglutamate; partial; in Am6.1b and Am6.1c: E60 and E64. Positions 78–84 (RTTSHPI) are excised as a propeptide.

This sequence belongs to the conotoxin O2 family. Three forms of this peptides have been described. The unmodified Am6.1a (Am3286) is not detected in the venom; Am6.1b (Am3408) is only Trp brominated, while Am6.1c (Am3452) is both Trp brominated and Glu gamma-carboxyglutamated. Both Am6.1b and Am6.1c are detected in the venom. In terms of tissue distribution, expressed by the venom duct.

It is found in the secreted. Its function is as follows. Gamma-conotoxins may act on voltage-gated non-specific cation pacemaker channels (HCN). This is Conotoxin Am6.1 from Conus amadis (Amadis cone).